Here is a 179-residue protein sequence, read N- to C-terminus: Inner membrane-spanning protein YciB (179 aa).

5 helical membrane passes run 22–42 (IYAATAALIVATAIVLIYSWV), 50–70 (MALITFVLVVVFGGLTLFFHN), 76–96 (WKVTVIYALFAGALLVSQWVM), 121–141 (LAWAVFFILCGLANIYIAFWL), and 149–169 (FKVFGLTALTLIFTLLSGIYI).

This sequence belongs to the YciB family.

The protein localises to the cell inner membrane. In terms of biological role, plays a role in cell envelope biogenesis, maintenance of cell envelope integrity and membrane homeostasis. This chain is Inner membrane-spanning protein YciB, found in Shigella boydii serotype 4 (strain Sb227).